Consider the following 72-residue polypeptide: Crustacean hyperglycemic hormone (72 aa).

A Pyrrolidone carboxylic acid modification is found at Q1. A D-phenylalanine modification is found at F3. Cystine bridges form between C7–C43, C23–C39, and C26–C52. Position 72 is a valine amide (V72).

In terms of tissue distribution, produced by the medulla terminalis X-organ in the eyestalks and transported to the sinus gland where they are stored and released.

The protein resides in the secreted. Its function is as follows. Hormone found in the sinus gland of isopods and decapods which controls the blood sugar level. Has a secretagogue action over the amylase released from the midgut gland. May act as a stress hormone and may be involved in the control of molting and reproduction. This Astacus astacus (Noble crayfish) protein is Crustacean hyperglycemic hormone.